The chain runs to 88 residues: MSEKQAHTRVIQGKVISQAGNKSIVILVERKVVHSKYRKIVKRFKKYTIHDENQSAKIGDVVSAIECKPISKTKAFRFKEIITAGVEL.

It belongs to the universal ribosomal protein uS17 family. In terms of assembly, part of the 30S ribosomal subunit.

One of the primary rRNA binding proteins, it binds specifically to the 5'-end of 16S ribosomal RNA. This chain is Small ribosomal subunit protein uS17, found in Helicobacter hepaticus (strain ATCC 51449 / 3B1).